The following is a 316-amino-acid chain: Methionyl-tRNA formyltransferase (316 aa).

A (6S)-5,6,7,8-tetrahydrofolate-binding site is contributed by 112–115 (GLLP).

It belongs to the Fmt family.

The enzyme catalyses L-methionyl-tRNA(fMet) + (6R)-10-formyltetrahydrofolate = N-formyl-L-methionyl-tRNA(fMet) + (6S)-5,6,7,8-tetrahydrofolate + H(+). Its function is as follows. Attaches a formyl group to the free amino group of methionyl-tRNA(fMet). The formyl group appears to play a dual role in the initiator identity of N-formylmethionyl-tRNA by promoting its recognition by IF2 and preventing the misappropriation of this tRNA by the elongation apparatus. The sequence is that of Methionyl-tRNA formyltransferase from Chlamydia muridarum (strain MoPn / Nigg).